Reading from the N-terminus, the 371-residue chain is Aminomethyltransferase (371 aa).

This sequence belongs to the GcvT family. As to quaternary structure, the glycine cleavage system is composed of four proteins: P, T, L and H.

It carries out the reaction N(6)-[(R)-S(8)-aminomethyldihydrolipoyl]-L-lysyl-[protein] + (6S)-5,6,7,8-tetrahydrofolate = N(6)-[(R)-dihydrolipoyl]-L-lysyl-[protein] + (6R)-5,10-methylene-5,6,7,8-tetrahydrofolate + NH4(+). Its function is as follows. The glycine cleavage system catalyzes the degradation of glycine. This is Aminomethyltransferase from Leptospira borgpetersenii serovar Hardjo-bovis (strain JB197).